The following is a 312-amino-acid chain: Malate dehydrogenase (312 aa).

Residues 7-13 (GAAGGIG) and aspartate 34 contribute to the NAD(+) site. Positions 81 and 87 each coordinate substrate. Residues asparagine 94 and 117-119 (ITN) contribute to the NAD(+) site. Positions 119 and 153 each coordinate substrate. Histidine 177 acts as the Proton acceptor in catalysis. Position 227 (methionine 227) interacts with NAD(+).

Belongs to the LDH/MDH superfamily. MDH type 1 family. Homodimer.

It carries out the reaction (S)-malate + NAD(+) = oxaloacetate + NADH + H(+). Functionally, catalyzes the reversible oxidation of malate to oxaloacetate. This Escherichia coli (strain SE11) protein is Malate dehydrogenase.